We begin with the raw amino-acid sequence, 545 residues long: Protein FAR1-RELATED SEQUENCE 9 (545 aa).

The region spanning 22 to 65 (LNYLKRRQLENPGFLYAIEDDCGNVFWADPTCRLNYTYFGDTLV) is the FAR1 domain. The region spanning 66-150 (FDTTYRRGKR…RVFSQTRLRF (85 aa)) is the MULE domain. Residues 345–381 (HTVSFDSLEVKANCSCQMFEYSGIICRHILAVFSAKN) form an SWIM-type zinc finger. Positions 460 to 495 (SNRTPGTRLPNGEAYPSEEARETANATNHPGGEKER) are disordered. The stretch at 492-545 (EKERTILELTAELERTGQRCEVYRANLLSILRDMEEQKFQLSLKVQNARLSLKE) forms a coiled coil.

It belongs to the FHY3/FAR1 family. In terms of tissue distribution, expressed in hypocotyls, rosette and cauline leaves, inflorescences stems, flowers and siliques.

It is found in the nucleus. Functionally, putative transcription activator involved in regulating light control of development. May act as a negative regulator specific to phyB signaling. This chain is Protein FAR1-RELATED SEQUENCE 9 (FRS9), found in Arabidopsis thaliana (Mouse-ear cress).